Here is a 156-residue protein sequence, read N- to C-terminus: MSRRRTAKKRIVMPDPVYKNSLLELIVRQVMRNGKKLLAYRIMYNSMIKIAEMTQKDPLDVLEKAIRNVTPLIEVKARRVGGSTYQVPLEVLPERGTTLAIRWILAACRKNRGKPMYIKLTNELIDASNKSGSAIKKKDEIHRMAEANKAFAKQRF.

The protein belongs to the universal ribosomal protein uS7 family. In terms of assembly, part of the 30S ribosomal subunit.

The protein localises to the plastid. In terms of biological role, one of the primary rRNA binding proteins, it binds directly to 16S rRNA where it nucleates assembly of the head domain of the 30S subunit. The polypeptide is Small ribosomal subunit protein uS7c (rps7) (Prototheca wickerhamii).